The chain runs to 156 residues: Snaclec jerdonibitin subunit alpha (156 aa).

The N-terminal stretch at 1-23 (MGRFIFVSFGLLVVFLSLSGTGA) is a signal peptide. 3 cysteine pairs are disulfide-bonded: Cys-25-Cys-36, Cys-53-Cys-150, and Cys-125-Cys-142. The region spanning 32–151 (FRQYCYRVFK…CGQQHLFMCK (120 aa)) is the C-type lectin domain.

The protein belongs to the snaclec family. As to quaternary structure, heterodimer of subunits alpha and beta; disulfide-linked. As to expression, expressed by the venom gland.

Its subcellular location is the secreted. In terms of biological role, snaclec that dose-dependently inhibits platelet aggregation induced by ristocetin or low-dose thrombin, but not by high-dose thrombin. Binds to GPIbalpha (GP1BA). In vivo, also dose-dependently induces thrombocytopenia of mice and platelet counts remains at very low level even after 18 hours intravenous injection. This chain is Snaclec jerdonibitin subunit alpha, found in Protobothrops jerdonii (Jerdon's pitviper).